A 174-amino-acid polypeptide reads, in one-letter code: UPF0316 protein lmo1776 (174 aa).

The next 3 helical transmembrane spans lie at 4-24, 36-56, and 62-82; these read GIFI…IYTV, LAAL…SLVL, and IANV…GMKI.

It belongs to the UPF0316 family.

It is found in the cell membrane. In Listeria monocytogenes serovar 1/2a (strain ATCC BAA-679 / EGD-e), this protein is UPF0316 protein lmo1776.